The sequence spans 44 residues: uncharacterized protein (44 aa).

The helical transmembrane segment at 6-26 (SILIRGGGGVLIVLILLLWIV) threads the bilayer.

Its subcellular location is the membrane. This is an uncharacterized protein from Ornithodoros (relapsing fever ticks).